A 403-amino-acid chain; its full sequence is Alpha-1-antiproteinase F (403 aa).

Residues 1–22 form the signal peptide; the sequence is SAIPRGLLLLAGLCCLVFGIMA. N-linked (GlcNAc...) asparagine glycosylation is found at asparagine 55, asparagine 92, asparagine 155, asparagine 222, and asparagine 256. Residues 358–377 are RCL; it reads GATELEITPHSVPQDLFFNK.

This sequence belongs to the serpin family.

Its subcellular location is the secreted. Its function is as follows. Inhibits elastase, chymotrypsin, cathepsin G, plasmin, and trypsin. In Cavia porcellus (Guinea pig), this protein is Alpha-1-antiproteinase F.